The sequence spans 360 residues: Phenylalanine--tRNA ligase alpha subunit (360 aa).

Glutamate 260 lines the Mg(2+) pocket.

Belongs to the class-II aminoacyl-tRNA synthetase family. Phe-tRNA synthetase alpha subunit type 1 subfamily. As to quaternary structure, tetramer of two alpha and two beta subunits. The cofactor is Mg(2+).

The protein resides in the cytoplasm. It carries out the reaction tRNA(Phe) + L-phenylalanine + ATP = L-phenylalanyl-tRNA(Phe) + AMP + diphosphate + H(+). The protein is Phenylalanine--tRNA ligase alpha subunit of Methylocella silvestris (strain DSM 15510 / CIP 108128 / LMG 27833 / NCIMB 13906 / BL2).